Reading from the N-terminus, the 116-residue chain is Large ribosomal subunit protein bL19 (116 aa).

It belongs to the bacterial ribosomal protein bL19 family.

Functionally, this protein is located at the 30S-50S ribosomal subunit interface and may play a role in the structure and function of the aminoacyl-tRNA binding site. The protein is Large ribosomal subunit protein bL19 of Chloroflexus aurantiacus (strain ATCC 29366 / DSM 635 / J-10-fl).